A 152-amino-acid chain; its full sequence is Transcriptional regulator MraZ (152 aa).

2 SpoVT-AbrB domains span residues 5-52 and 81-124; these read ATTL…PLPE and ADDC…NEDA.

Belongs to the MraZ family. As to quaternary structure, forms oligomers.

It is found in the cytoplasm. The protein resides in the nucleoid. The sequence is that of Transcriptional regulator MraZ from Idiomarina loihiensis (strain ATCC BAA-735 / DSM 15497 / L2-TR).